We begin with the raw amino-acid sequence, 430 residues long: Serine--tRNA ligase (430 aa).

237–239 (TAE) contributes to the L-serine binding site. 268–270 (RSE) contributes to the ATP binding site. Glu-291 is an L-serine binding site. 355–358 (EISS) is a binding site for ATP. Residue Ser-391 participates in L-serine binding.

Belongs to the class-II aminoacyl-tRNA synthetase family. Type-1 seryl-tRNA synthetase subfamily. In terms of assembly, homodimer. The tRNA molecule binds across the dimer.

It localises to the cytoplasm. The enzyme catalyses tRNA(Ser) + L-serine + ATP = L-seryl-tRNA(Ser) + AMP + diphosphate + H(+). It catalyses the reaction tRNA(Sec) + L-serine + ATP = L-seryl-tRNA(Sec) + AMP + diphosphate + H(+). The protein operates within aminoacyl-tRNA biosynthesis; selenocysteinyl-tRNA(Sec) biosynthesis; L-seryl-tRNA(Sec) from L-serine and tRNA(Sec): step 1/1. In terms of biological role, catalyzes the attachment of serine to tRNA(Ser). Is also able to aminoacylate tRNA(Sec) with serine, to form the misacylated tRNA L-seryl-tRNA(Sec), which will be further converted into selenocysteinyl-tRNA(Sec). This chain is Serine--tRNA ligase, found in Escherichia fergusonii (strain ATCC 35469 / DSM 13698 / CCUG 18766 / IAM 14443 / JCM 21226 / LMG 7866 / NBRC 102419 / NCTC 12128 / CDC 0568-73).